The following is a 96-amino-acid chain: Aspartyl/glutamyl-tRNA(Asn/Gln) amidotransferase subunit C (96 aa).

It belongs to the GatC family. As to quaternary structure, heterotrimer of A, B and C subunits.

The catalysed reaction is L-glutamyl-tRNA(Gln) + L-glutamine + ATP + H2O = L-glutaminyl-tRNA(Gln) + L-glutamate + ADP + phosphate + H(+). It carries out the reaction L-aspartyl-tRNA(Asn) + L-glutamine + ATP + H2O = L-asparaginyl-tRNA(Asn) + L-glutamate + ADP + phosphate + 2 H(+). Its function is as follows. Allows the formation of correctly charged Asn-tRNA(Asn) or Gln-tRNA(Gln) through the transamidation of misacylated Asp-tRNA(Asn) or Glu-tRNA(Gln) in organisms which lack either or both of asparaginyl-tRNA or glutaminyl-tRNA synthetases. The reaction takes place in the presence of glutamine and ATP through an activated phospho-Asp-tRNA(Asn) or phospho-Glu-tRNA(Gln). The polypeptide is Aspartyl/glutamyl-tRNA(Asn/Gln) amidotransferase subunit C (Symbiobacterium thermophilum (strain DSM 24528 / JCM 14929 / IAM 14863 / T)).